A 24-amino-acid polypeptide reads, in one-letter code: Unknown protein 6 (24 aa).

The polypeptide is Unknown protein 6 (Lonomia obliqua (Moth)).